The following is a 126-amino-acid chain: Small ribosomal subunit protein eS6 (126 aa).

It belongs to the eukaryotic ribosomal protein eS6 family.

The sequence is that of Small ribosomal subunit protein eS6 from Nanoarchaeum equitans (strain Kin4-M).